The sequence spans 1421 residues: Cytoadherence-linked asexual protein 3.2 (1421 aa).

Positions M1–C24 are cleaved as a signal peptide. 4 cysteine pairs are disulfide-bonded: C335-C363, C409-C415, C519-C547, and C523-C544. A helical transmembrane segment spans residues N1203–Q1223. C1352 and C1355 form a disulfide bridge. The tract at residues G1371–N1413 is disordered. Residues D1398–D1412 are compositionally biased toward acidic residues.

Component of the RhopH complex. RhopH complex is at least composed of CLAG3.1/CLAG3.2, RhopH2 and RhopH3 with a 1:1:1 subunit stoichiometry. CLAG3.1/CLAG3.2 mediates subunit association through independent contacts with RhopH2 and RhopH3, which do not directly interact with one another. Interacts with RhopH2. Interacts with RhopH3.

It is found in the host cell membrane. The protein resides in the parasitophorous vacuole membrane. It localises to the host cytoplasm. The protein localises to the cytoplasmic vesicle. Its subcellular location is the secretory vesicle. It is found in the rhoptry. In terms of biological role, participates in the formation of new permeability pathways in Plasmodium-infected erythrocytes enabling the uptake of nutrients from the blood plasma. The protein is Cytoadherence-linked asexual protein 3.2 of Plasmodium falciparum.